A 304-amino-acid chain; its full sequence is Cytochrome c biogenesis protein CcsA (304 aa).

8 helical membrane-spanning segments follow: residues 8-28 (LVTS…PIAF), 37-57 (PGVV…QLVL), 63-83 (GHFP…ACTL), 96-116 (IVAA…SFAL), 141-161 (VIMV…AVLV), 212-232 (TITV…VWAN), 246-263 (TWAL…HTRL), and 275-295 (VAVV…LLGI).

This sequence belongs to the CcmF/CycK/Ccl1/NrfE/CcsA family. May interact with ccs1.

The protein localises to the cellular thylakoid membrane. Its function is as follows. Required during biogenesis of c-type cytochromes (cytochrome c6 and cytochrome f) at the step of heme attachment. In Synechococcus sp. (strain CC9902), this protein is Cytochrome c biogenesis protein CcsA.